A 693-amino-acid polypeptide reads, in one-letter code: Methionine--tRNA ligase (693 aa).

Positions Pro-12 to His-22 match the 'HIGH' region motif. Residues Cys-143, Cys-146, Cys-156, and Cys-159 each contribute to the Zn(2+) site. A 'KMSKS' region motif is present at residues Lys-330 to Ser-334. Residue Lys-333 coordinates ATP. Residues Ala-557–Glu-576 form a disordered region. The tRNA-binding domain occupies Asp-590 to Arg-693.

The protein belongs to the class-I aminoacyl-tRNA synthetase family. MetG type 1 subfamily. Homodimer. Zn(2+) serves as cofactor.

It is found in the cytoplasm. It catalyses the reaction tRNA(Met) + L-methionine + ATP = L-methionyl-tRNA(Met) + AMP + diphosphate. Its function is as follows. Is required not only for elongation of protein synthesis but also for the initiation of all mRNA translation through initiator tRNA(fMet) aminoacylation. The sequence is that of Methionine--tRNA ligase from Stenotrophomonas maltophilia (strain R551-3).